A 323-amino-acid chain; its full sequence is Viral cathepsin (323 aa).

Positions 1-18 (MSKFLLYWFVYGVVCSAA) are cleaved as a signal peptide. Positions 19–112 (YDILKAPNYF…VVLDRPPGKG (94 aa)) are cleaved as a propeptide — activation peptide. 3 cysteine pairs are disulfide-bonded: Cys-133/Cys-174, Cys-167/Cys-207, and Cys-262/Cys-310. Cys-136 is a catalytic residue. A glycan (N-linked (GlcNAc...) asparagine; by host) is linked at Asn-158. Active-site residues include His-269 and Asn-289.

This sequence belongs to the peptidase C1 family. Post-translationally, synthesized as an inactive proenzyme and activated by proteolytic removal of the inhibitory propeptide.

It carries out the reaction Endopeptidase of broad specificity, hydrolyzing substrates of both cathepsin L and cathepsin B.. Functionally, cysteine protease that plays an essential role in host liquefaction to facilitate horizontal transmission of the virus. May participate in the degradation of foreign protein expressed by the baculovirus system. This is Viral cathepsin (VCATH) from Lepidoptera (butterflies and moths).